A 388-amino-acid chain; its full sequence is Na(+)/H(+) antiporter NhaA (388 aa).

The next 11 membrane-spanning stretches (helical) occupy residues 14 to 34, 59 to 79, 95 to 115, 125 to 145, 154 to 174, 179 to 199, 219 to 239, 254 to 274, 292 to 312, 328 to 348, and 360 to 380; these read GGII…MGAT, MLLW…GLEV, AFPV…YLAF, GWAI…ALLG, IFLM…IALF, LSIV…LLNL, VLKS…FIPL, VLHP…NAGV, IIAG…WLAL, IMAV…IASL, and WAKL…YSWL.

Belongs to the NhaA Na(+)/H(+) (TC 2.A.33) antiporter family.

It is found in the cell inner membrane. It carries out the reaction Na(+)(in) + 2 H(+)(out) = Na(+)(out) + 2 H(+)(in). Its function is as follows. Na(+)/H(+) antiporter that extrudes sodium in exchange for external protons. The sequence is that of Na(+)/H(+) antiporter NhaA from Salmonella paratyphi A (strain ATCC 9150 / SARB42).